A 225-amino-acid polypeptide reads, in one-letter code: Uracil-DNA glycosylase (225 aa).

The Proton acceptor role is filled by Asp-68.

This sequence belongs to the uracil-DNA glycosylase (UDG) superfamily. UNG family.

The protein resides in the cytoplasm. It catalyses the reaction Hydrolyzes single-stranded DNA or mismatched double-stranded DNA and polynucleotides, releasing free uracil.. Its function is as follows. Excises uracil residues from the DNA which can arise as a result of misincorporation of dUMP residues by DNA polymerase or due to deamination of cytosine. This chain is Uracil-DNA glycosylase, found in Mycolicibacterium gilvum (strain PYR-GCK) (Mycobacterium gilvum (strain PYR-GCK)).